The primary structure comprises 200 residues: dITP/XTP pyrophosphatase (200 aa).

7 to 12 (TSNKHK) serves as a coordination point for substrate. Positions 38 and 73 each coordinate Mg(2+). D73 acts as the Proton acceptor in catalysis. Residues S74, 154–157 (FGYD), K177, and 182–183 (HR) each bind substrate.

The protein belongs to the HAM1 NTPase family. In terms of assembly, homodimer. It depends on Mg(2+) as a cofactor.

The enzyme catalyses XTP + H2O = XMP + diphosphate + H(+). The catalysed reaction is dITP + H2O = dIMP + diphosphate + H(+). It carries out the reaction ITP + H2O = IMP + diphosphate + H(+). In terms of biological role, pyrophosphatase that catalyzes the hydrolysis of nucleoside triphosphates to their monophosphate derivatives, with a high preference for the non-canonical purine nucleotides XTP (xanthosine triphosphate), dITP (deoxyinosine triphosphate) and ITP. Seems to function as a house-cleaning enzyme that removes non-canonical purine nucleotides from the nucleotide pool, thus preventing their incorporation into DNA/RNA and avoiding chromosomal lesions. The protein is dITP/XTP pyrophosphatase of Campylobacter jejuni subsp. doylei (strain ATCC BAA-1458 / RM4099 / 269.97).